A 36-amino-acid polypeptide reads, in one-letter code: Egg-laying-like hormone (36 aa).

Lys36 bears the Lysine amide mark.

Supra, subesophageal ganglia and segmental ganglia of the ventral nerve cord and brain.

Its function is as follows. May be involved in leech reproduction. This is Egg-laying-like hormone from Theromyzon tessulatum (Duck leech).